The sequence spans 631 residues: Probable potassium transport system protein Kup 1 (631 aa).

Helical transmembrane passes span 16 to 36 (LGLS…SPLY), 58 to 78 (VLSL…LVFV), 109 to 129 (VLVF…TLTP), 145 to 165 (PLFH…LFLI), 173 to 193 (VGAL…LLGI), 219 to 239 (GWSG…GEAL), 255 to 275 (WFCC…ALLL), 288 to 308 (LAPP…TIIA), 345 to 365 (IYIP…VAGF), 370 to 390 (GLAA…ALLV), 402 to 422 (PLAV…FFGA), and 427 to 447 (VGAG…VMIT).

It belongs to the HAK/KUP transporter (TC 2.A.72) family.

The protein localises to the cell inner membrane. It catalyses the reaction K(+)(in) + H(+)(in) = K(+)(out) + H(+)(out). In terms of biological role, transport of potassium into the cell. Likely operates as a K(+):H(+) symporter. In Geobacter sulfurreducens (strain ATCC 51573 / DSM 12127 / PCA), this protein is Probable potassium transport system protein Kup 1.